The sequence spans 399 residues: MAKEKFNRTNPHVNIGTIGHVYHGKTTLSAAISAVLSLKGLAEMKDYDNIDNAPQEKERGITIATSHIEYETETRHYAHVDCPGHADYVKNMITGAAQMDGAILVVSAADGPMPQTREHILLSRQVGVPHIVVFLNKQDMVDDQELLELVEMEVRELLSAYEFPGDDTPIVAGSALRALEEAKAGNVGEWGEKVLKLMAEVDSYIPTPERDTEKTFLMPVEDVFSIAGRGTVVTGRIERGVVKVGDEVEIVGIRATQKTTVTGVEMFRKELEKGEAGDNVGVLLRGTKKEEVERGMVLCKPGSITPHKKFEEEIYVLSKEEGGRHTPFFTNYRPQFYVRTTDVTGSITLPEGVEMVMPGDNVKITVELISPVALELGTKFAIREGGRTVGAGVVSNIIE.

The tr-type G domain occupies 10-209 (NPHVNIGTIG…EVDSYIPTPE (200 aa)). Residues 19–26 (GHVYHGKT) form a G1 region. GTP is bound at residue 19–26 (GHVYHGKT). Thr-26 serves as a coordination point for Mg(2+). Residues 60 to 64 (GITIA) are G2. Residues 81–84 (DCPG) are G3. Residues 81 to 85 (DCPGH) and 136 to 139 (NKQD) each bind GTP. Positions 136-139 (NKQD) are G4. The interval 174–176 (SAL) is G5.

The protein belongs to the TRAFAC class translation factor GTPase superfamily. Classic translation factor GTPase family. EF-Tu/EF-1A subfamily. Monomer.

The protein resides in the cytoplasm. It catalyses the reaction GTP + H2O = GDP + phosphate + H(+). Functionally, GTP hydrolase that promotes the GTP-dependent binding of aminoacyl-tRNA to the A-site of ribosomes during protein biosynthesis. This Helicobacter pylori (strain J99 / ATCC 700824) (Campylobacter pylori J99) protein is Elongation factor Tu.